Reading from the N-terminus, the 448-residue chain is MWVAERVVGERRMREIQRFARNAKLTVVCLLLTVVVLRGTVGAGKFGTPQQDLIELRHRFISHPHRALAEHHDALSRGGGSSSSSGRAAQRDDEPDPPPRTLRDPPYTLGPKISDWDEQRAAWHRRHPETPPFVNDVKPRVLLVTGSSPKPCENPVGDHYLLKSIKNKMDYCRVHGLEIFYNMALLDAEMAGFWAKLPLLRALLLAHPEIEFLWWMDSDAMFSDMAFELPWERYGPYNLIMHGWDEMVYDDKNWIGLNTGSFLLRNCQWSLDFLDTWAPMGPKGPVRIEAGKVLTKYLKDRPVFEADDQSAMVYILATEREKWGDKVYLENGYYLHGYWGILVDRYEEMLENYHPGLGDHRWPLVTHFVGCKPCGKFGDYPVERCLKQMERAFNFGDNQILQMYGFTHKSLGSRKVKRIRNETSNPLDVKDELGLLHPAFKAMKTTST.

The Cytoplasmic segment spans residues 1–19 (MWVAERVVGERRMREIQRF). The chain crosses the membrane as a helical; Signal-anchor for type II membrane protein span at residues 20-42 (ARNAKLTVVCLLLTVVVLRGTVG). The Lumenal segment spans residues 43 to 448 (AGKFGTPQQD…AFKAMKTTST (406 aa)). Positions 71-113 (HHDALSRGGGSSSSSGRAAQRDDEPDPPPRTLRDPPYTLGPKI) are disordered. A glycan (N-linked (GlcNAc...) asparagine) is linked at Asn-421.

This sequence belongs to the glycosyltransferase 34 family.

The protein localises to the golgi apparatus membrane. The catalysed reaction is Transfers an alpha-D-xylosyl residue from UDP-D-xylose to a glucose residue in xyloglucan, forming an alpha-(1-&gt;6)-D-xylosyl-D-glucose linkage.. Functionally, probable xyloglucan xylosyltransferase involved in the biosynthesis of xyloglucan in roots. The chain is Probable xyloglucan 6-xylosyltransferase 1 from Oryza sativa subsp. indica (Rice).